Reading from the N-terminus, the 183-residue chain is Interleukin-24 (183 aa).

Residues 1-28 (MQTSLRQQILPGLSLILLVLNQVPELQG) form the signal peptide. Cysteine 36 and cysteine 83 form a disulfide bridge. N-linked (GlcNAc...) asparagine glycosylation is present at asparagine 76. Lysine 99 is covalently cross-linked (Glycyl lysine isopeptide (Lys-Gly) (interchain with G-Cter in ubiquitin)).

It belongs to the IL-10 family. Glycosylated. In terms of processing, ubiquitination at Lys-99 promotes proteasomal degradation.

It localises to the secreted. Multifunctional cytokine mainly produced by T-cells that plays a regulatory role in immune response, tissue homeostasis, host defense, and oncogenesis. Possesses antiviral functions and induces the type I interferon response during influenza infection. Signals through two receptor complexes IL20RA/IL20RB or IL20RB/IL22RA1. In turn, stimulates the JAK1-STAT3 and MAPK pathways and promotes the secretion of pro-inflammatory mediators including IL8 and MMP1. Intracellularly, maintains endoplasmic reticulum homeostasis by restricting the eIF2alpha-CHOP pathway-mediated stress signal. In addition, acts as a quality control mechanism for the ubiquitin proteasome system by alerting the cell to proteasome dysfunction through activation of PKR/EIF2AK2. This chain is Interleukin-24 (Il24), found in Rattus norvegicus (Rat).